The following is a 187-amino-acid chain: Ponticulin-like protein K (187 aa).

Residues 1-19 (MKNLILLFLLISIINLIQS) form the signal peptide. Asn31, Asn70, Asn86, Asn93, Asn119, Asn128, Asn146, Asn160, and Asn161 each carry an N-linked (GlcNAc...) asparagine glycan. Over residues 115 to 146 (PSPSNSSNPSPSPNTTSSSSLSSSSLNSNEPN) the composition is skewed to low complexity. Positions 115-161 (PSPSNSSNPSPSPNTTSSSSLSSSSLNSNEPNQTTKPPKTNEPQKNN) are disordered. The span at 147–161 (QTTKPPKTNEPQKNN) shows a compositional bias: polar residues. Residue Asn161 is the site of GPI-like-anchor amidated asparagine attachment. The propeptide at 162–187 (STSNIPNFFAIFGFLVLIIFILGDKI) is removed in mature form.

It belongs to the ponticulin family. In terms of processing, the GPI-like-anchor contains a phosphoceramide group, rather than a phosphatidyl group.

It localises to the cell membrane. Binds F-actin and nucleates actin assembly. The polypeptide is Ponticulin-like protein K (ponK) (Dictyostelium discoideum (Social amoeba)).